Consider the following 303-residue polypeptide: MTASAPAASASARLLDGRRIAEELLDGLKLRVDARLAAGKARPGLAVVLVGGDPASSVYVRNKRRAAEKVGIEAFDYDLPQGTSEAQLASLIDELNADPKIHGILIQLPLPGIPDANRLIQRIDPRKDVDGFHPQNVGHLALREFGLRPCTPRGIVTLLGHTDQPVRGRNATIVGVSNHVGRPMGLELLIAGCTVTSCHKFTPPDVLEASVRNADILVVAVGRPGLIPGEWVKPGAVVIDVGINRLDDGRLVGDVGFDAAAQRAAWITPVPGGVGPMTVATLMQNTIEAADAAESGDSGLGIG.

NADP(+) contacts are provided by residues 175–177 (GVS) and I243.

The protein belongs to the tetrahydrofolate dehydrogenase/cyclohydrolase family. In terms of assembly, homodimer.

The catalysed reaction is (6R)-5,10-methylene-5,6,7,8-tetrahydrofolate + NADP(+) = (6R)-5,10-methenyltetrahydrofolate + NADPH. The enzyme catalyses (6R)-5,10-methenyltetrahydrofolate + H2O = (6R)-10-formyltetrahydrofolate + H(+). It participates in one-carbon metabolism; tetrahydrofolate interconversion. In terms of biological role, catalyzes the oxidation of 5,10-methylenetetrahydrofolate to 5,10-methenyltetrahydrofolate and then the hydrolysis of 5,10-methenyltetrahydrofolate to 10-formyltetrahydrofolate. This is Bifunctional protein FolD from Xanthomonas euvesicatoria pv. vesicatoria (strain 85-10) (Xanthomonas campestris pv. vesicatoria).